The primary structure comprises 125 residues: Small ribosomal subunit protein eS6 (125 aa).

It belongs to the eukaryotic ribosomal protein eS6 family. Part of the 30S ribosomal subunit.

In Thermococcus kodakarensis (strain ATCC BAA-918 / JCM 12380 / KOD1) (Pyrococcus kodakaraensis (strain KOD1)), this protein is Small ribosomal subunit protein eS6.